We begin with the raw amino-acid sequence, 199 residues long: Thymidine kinase (199 aa).

ATP contacts are provided by residues 15–22 (GSMFSGKS) and 88–91 (DEIQ). Glu89 acts as the Proton acceptor in catalysis. Zn(2+) is bound by residues Cys145, Cys148, Cys183, and His186.

It belongs to the thymidine kinase family. As to quaternary structure, homotetramer.

The protein localises to the cytoplasm. The catalysed reaction is thymidine + ATP = dTMP + ADP + H(+). In Staphylococcus haemolyticus (strain JCSC1435), this protein is Thymidine kinase.